Reading from the N-terminus, the 441-residue chain is MSEREVSTVPAGTDMPAAKKQKLSSDENSNPDLSGDENDDAVSIESGTNTERPDTPTNTPNAPGRKSWGKGKWKSKKCKYSFKCVNSLKEDHNQPLFGVQFNWHSKEGDPLVFATVGSNRVTLYECHSQGEIRLLQSYVDADADENFYTCAWTYDSNTSHPLLAVAGSRGIIRIINPITMQCIKHYVGHGNAINELKFHPRDPNLLLSVSKDHALRLWNIQTDTLVAIFGGVEGHRDEVLSADYDLLGEKIMSCGMDHSLKLWRINSKRMMNAIKESYDYNPNKTNRPFISQKIHFPDFSTRDIHRNYVDCVRWLGDLILSKSCENAIVCWKPGKMEDDIDKIKPSESNVTILGRFDYSQCDIWYMRFSMDFWQKMLALGNQVGKLYVWDLEVEDPHKAKCTTLTHHKCGAAIRQTSFSRDSSILIAVCDDASIWRWDRLR.

The interval 1-72 (MSEREVSTVP…PGRKSWGKGK (72 aa)) is disordered. Position 2 is an N-acetylserine (serine 2). A phosphoserine mark is found at serine 2 and serine 34. The span at 45-61 (ESGTNTERPDTPTNTPN) shows a compositional bias: polar residues. Residue threonine 55 is modified to Phosphothreonine. Lysine 66 is subject to N6,N6,N6-trimethyllysine; alternate. Lysine 66 carries the N6,N6-dimethyllysine; alternate modification. The residue at position 66 (lysine 66) is an N6-methyllysine; alternate. The tract at residues 81 to 441 (SFKCVNSLKE…ASIWRWDRLR (361 aa)) is interaction with EZH2. WD repeat units follow at residues 91–134 (DHNQ…EIRL), 142–185 (DADE…CIKH), 188–228 (GHGN…LVAI), and 234–275 (GHRD…NAIK). N6,N6,N6-trimethyllysine; alternate occurs at positions 197, 268, and 284. 3 positions are modified to N6,N6-dimethyllysine; alternate: lysine 197, lysine 268, and lysine 284. N6-methyllysine; alternate is present on residues lysine 197, lysine 268, and lysine 284. WD repeat units lie at residues 304 to 341 (IHRNYVDCVRWLGDLILSKSCENAIVCWKPGKMEDDID), 359 to 399 (SQCD…PHKA), and 408 to 441 (KCGAAIRQTSFSRDSSILIAVCDDASIWRWDRLR).

This sequence belongs to the WD repeat ESC family. In terms of assembly, component of the PRC2/EED-EZH2 complex, which includes EED, EZH2, SUZ12, RBBP4 and RBBP7 and possibly AEBP2. The minimum components required for methyltransferase activity of the PRC2/EED-EZH2 complex are EED, EZH2 and SUZ12. Component of the PRC2/EED-EZH1 complex, which includes EED, EZH1, SUZ12, RBBP4 and AEBP2. The PRC2 complex may also interact with DNMT1, DNMT3A, DNMT3B and PHF1 via the EZH2 subunit and with SIRT1 via the SUZ12 subunit. Interacts with HDAC, HDAC2, histone H1, KMT2A/MLL1 and YY1. May interact with ITGA4, ITGAE and ITGB7. Interacts with CDYL. Interacts with BMAL1. Methylated. Binding to histone H1 'Lys-26' promotes mono-, di-, and trimethylation of internal lysines.

The protein localises to the nucleus. Polycomb group (PcG) protein. Component of the PRC2/EED-EZH2 complex, which methylates 'Lys-9' and 'Lys-27' of histone H3, leading to transcriptional repression of the affected target gene. Also recognizes 'Lys-26' trimethylated histone H1 with the effect of inhibiting PRC2 complex methyltransferase activity on nucleosomal histone H3 'Lys-27', whereas H3 'Lys-27' recognition has the opposite effect, enabling the propagation of this repressive mark. The PRC2/EED-EZH2 complex may also serve as a recruiting platform for DNA methyltransferases, thereby linking two epigenetic repression systems. This is Polycomb protein EED (EED) from Bos taurus (Bovine).